The sequence spans 245 residues: 1-(5-phosphoribosyl)-5-[(5-phosphoribosylamino)methylideneamino] imidazole-4-carboxamide isomerase (245 aa).

The active-site Proton acceptor is the Asp7. Asp129 (proton donor) is an active-site residue.

Belongs to the HisA/HisF family.

The protein localises to the cytoplasm. It catalyses the reaction 1-(5-phospho-beta-D-ribosyl)-5-[(5-phospho-beta-D-ribosylamino)methylideneamino]imidazole-4-carboxamide = 5-[(5-phospho-1-deoxy-D-ribulos-1-ylimino)methylamino]-1-(5-phospho-beta-D-ribosyl)imidazole-4-carboxamide. The protein operates within amino-acid biosynthesis; L-histidine biosynthesis; L-histidine from 5-phospho-alpha-D-ribose 1-diphosphate: step 4/9. This chain is 1-(5-phosphoribosyl)-5-[(5-phosphoribosylamino)methylideneamino] imidazole-4-carboxamide isomerase, found in Salmonella arizonae (strain ATCC BAA-731 / CDC346-86 / RSK2980).